Here is a 481-residue protein sequence, read N- to C-terminus: Glutamate mutase epsilon subunit (481 aa).

R67 is an L-glutamate binding site. G69 contributes to the adenosylcob(III)alamin binding site. R99 is a binding site for L-glutamate. N122 contacts adenosylcob(III)alamin. L-glutamate contacts are provided by residues 148–149, E170, and Y176; that span reads RH. An adenosylcob(III)alamin-binding site is contributed by P179. Y180 contributes to the L-glutamate binding site. Adenosylcob(III)alamin contacts are provided by F296, K325, E329, and I333.

This sequence belongs to the methylaspartate mutase GlmE subunit family. In terms of assembly, heterotetramer composed of 2 epsilon subunits (GlmE) and 2 sigma subunits (GlmS). GlmE exists as a homodimer and GlmS as a monomer. Requires adenosylcob(III)alamin as cofactor.

It catalyses the reaction (2S,3S)-3-methyl-L-aspartate = L-glutamate. The protein operates within amino-acid degradation; L-glutamate degradation via mesaconate pathway; acetate and pyruvate from L-glutamate: step 1/4. In terms of biological role, catalyzes the carbon skeleton rearrangement of L-glutamate to L-threo-3-methylaspartate ((2S,3S)-3-methylaspartate). This Escherichia coli O157:H7 protein is Glutamate mutase epsilon subunit.